The sequence spans 190 residues: Shikimate kinase (190 aa).

13 to 18 (GAGKTT) is an ATP binding site. T17 contacts Mg(2+). Substrate contacts are provided by D35, R59, and G81. R119 contributes to the ATP binding site. A substrate-binding site is contributed by R138.

It belongs to the shikimate kinase family. In terms of assembly, monomer. Mg(2+) is required as a cofactor.

The protein resides in the cytoplasm. It carries out the reaction shikimate + ATP = 3-phosphoshikimate + ADP + H(+). It functions in the pathway metabolic intermediate biosynthesis; chorismate biosynthesis; chorismate from D-erythrose 4-phosphate and phosphoenolpyruvate: step 5/7. Catalyzes the specific phosphorylation of the 3-hydroxyl group of shikimic acid using ATP as a cosubstrate. This Ralstonia nicotianae (strain ATCC BAA-1114 / GMI1000) (Ralstonia solanacearum) protein is Shikimate kinase.